A 685-amino-acid chain; its full sequence is Probable cysteine desulfurase (685 aa).

The cargo-loading domain stretch occupies residues 1-282 (MTRSPCSTTS…RDEHEVFDVA (282 aa)). Disordered regions lie at residues 48 to 135 (SIRP…TSAG) and 162 to 185 (PTPA…VPDT). Low complexity predominate over residues 71–85 (ATAATSAGRTAAGTA). Residues 102–121 (LPPPASPAPEAPPQAAPPAP) show a composition bias toward pro residues. Residues 122–135 (RGSAPDATAATSAG) show a composition bias toward low complexity. Positions 164–178 (PAGPEAPPQSAPPAP) are enriched in pro residues. An N6-(pyridoxal phosphate)lysine modification is found at lysine 502. Catalysis depends on cysteine 640, which acts as the Cysteine persulfide intermediate.

Belongs to the class-V pyridoxal-phosphate-dependent aminotransferase family. Csd subfamily. Isolated from bacteria in a complex with encapsulin 2A (AC I3NID5), strongly suggesting it is found in a type 2A encapsulin nanocompartment. There are 1-2 copies of this protein in each encapsulin shell. Requires pyridoxal 5'-phosphate as cofactor.

The protein localises to the encapsulin nanocompartment. It is found in the cell membrane. The catalysed reaction is (sulfur carrier)-H + L-cysteine = (sulfur carrier)-SH + L-alanine. Cargo protein of a type 2A encapsulin nanocompartment involved in sulfur metabolism. Cysteine desulfurases mobilize the sulfur from L-cysteine to yield L-alanine, an essential step in sulfur metabolism for biosynthesis of a variety of sulfur-containing biomolecules. The sequence is that of Probable cysteine desulfurase from Mycolicibacterium paratuberculosis (strain ATCC BAA-968 / K-10) (Mycobacterium paratuberculosis).